The chain runs to 193 residues: uncharacterized protein (193 aa).

This is an uncharacterized protein from Mycoplasma genitalium (strain ATCC 33530 / DSM 19775 / NCTC 10195 / G37) (Mycoplasmoides genitalium).